A 144-amino-acid chain; its full sequence is UPF0735 ACT domain-containing protein LCABL_12100 (144 aa).

In terms of domain architecture, ACT spans Val68–Val143.

It belongs to the UPF0735 family.

The protein is UPF0735 ACT domain-containing protein LCABL_12100 of Lacticaseibacillus casei (strain BL23) (Lactobacillus casei).